The sequence spans 91 residues: DNA-binding protein HU-beta 2 (91 aa).

Belongs to the bacterial histone-like protein family.

Histone-like DNA-binding protein which is capable of wrapping DNA to stabilize it, and thus to prevent its denaturation under extreme environmental conditions. This is DNA-binding protein HU-beta 2 (hupB2) from Neisseria meningitidis serogroup A / serotype 4A (strain DSM 15465 / Z2491).